Here is a 156-residue protein sequence, read N- to C-terminus: Small ribosomal subunit protein uS7 (156 aa).

Belongs to the universal ribosomal protein uS7 family. In terms of assembly, part of the 30S ribosomal subunit. Contacts proteins S9 and S11.

One of the primary rRNA binding proteins, it binds directly to 16S rRNA where it nucleates assembly of the head domain of the 30S subunit. Is located at the subunit interface close to the decoding center, probably blocks exit of the E-site tRNA. The polypeptide is Small ribosomal subunit protein uS7 (Shewanella baltica (strain OS223)).